Reading from the N-terminus, the 289-residue chain is BTB/POZ domain-containing protein KCTD7 (289 aa).

The segment at 1–42 is disordered; sequence MVVVTGREPDSRHSDGAMSSSEAEDDFLEPATPTATQAGHGL. Residues 53–141 form the BTB domain; that stretch reads VPLNIGGAHF…YAIGPLLEQL (89 aa).

As to quaternary structure, interacts with CUL3. In terms of tissue distribution, high expression in brain, particularly in post-mitotic neurons. Expressed in the mitral cells of the olfactory bulbs, the hippocampus, the deep layers of the cerebral cortex and Purkinje cells of the cerebellum. Not detected in astrocytes or microglial cells. Also expressed in heart, liver, spleen and kidney.

The protein resides in the cell membrane. It localises to the cytoplasm. Its subcellular location is the cytosol. Its function is as follows. May be involved in the control of excitability of cortical neurons. This Mus musculus (Mouse) protein is BTB/POZ domain-containing protein KCTD7 (Kctd7).